The chain runs to 97 residues: Small ribosomal subunit protein bS20 (97 aa).

It belongs to the bacterial ribosomal protein bS20 family.

In terms of biological role, binds directly to 16S ribosomal RNA. The sequence is that of Small ribosomal subunit protein bS20 from Prochlorococcus marinus subsp. pastoris (strain CCMP1986 / NIES-2087 / MED4).